The primary structure comprises 314 residues: Cytochrome b558/566 subunit B (314 aa).

8 helical membrane-spanning segments follow: residues Leu-47–Ser-67, Ser-76–Tyr-96, Leu-102–Ile-122, Leu-127–Leu-147, Leu-155–Ile-175, Tyr-186–Ile-206, His-233–Ile-253, and Phe-264–Leu-284.

Its subcellular location is the cell membrane. The sequence is that of Cytochrome b558/566 subunit B (cbsB) from Saccharolobus solfataricus (strain ATCC 35092 / DSM 1617 / JCM 11322 / P2) (Sulfolobus solfataricus).